The following is a 304-amino-acid chain: Haloalkane dehalogenase (304 aa).

In terms of domain architecture, AB hydrolase-1 spans 42-154; the sequence is PIVFLHGNPT…DSVDLSPEFV (113 aa). Asp-114 serves as the catalytic Nucleophile. The active-site Proton donor is the Glu-138. The Proton acceptor role is filled by His-280.

Belongs to the haloalkane dehalogenase family. Type 2 subfamily. As to quaternary structure, monomer.

The catalysed reaction is 1-haloalkane + H2O = a halide anion + a primary alcohol + H(+). Catalyzes hydrolytic cleavage of carbon-halogen bonds in halogenated aliphatic compounds, leading to the formation of the corresponding primary alcohols, halide ions and protons. This is Haloalkane dehalogenase from Agrobacterium fabrum (strain C58 / ATCC 33970) (Agrobacterium tumefaciens (strain C58)).